The primary structure comprises 2126 residues: Phthioceranic/hydroxyphthioceranic acid synthase (2126 aa).

Residues 24–447 (VTPVAVIGMA…GTNVHAVVEQ (424 aa)) enclose the Ketosynthase family 3 (KS3) domain. Residue C196 is the Acyl-thioester intermediate; for beta-ketoacyl synthase activity of the active site. Residues H331 and H367 each act as for beta-ketoacyl synthase activity in the active site. The linker domain (LD) stretch occupies residues 449-549 (PQTEAQPHAA…VYQPAVGQDD (101 aa)). Residues 550–849 (RGPVWLFSGQ…VAALAGMRRE (300 aa)) are acyltransferase (AT). Catalysis depends on S641, which acts as the Acyl-ester intermediate; for acyltransferase activity. The segment at 909-1191 (STVAVHPLLG…LAVCGLRIGT (283 aa)) is dehydratase (DH). Residues 914-1032 (HPLLGAHVRL…RRASAVLQQV (119 aa)) form an N-terminal hotdog fold region. The 285-residue stretch at 914 to 1198 (HPLLGAHVRL…IGTGVSERDK (285 aa)) folds into the PKS/mFAS DH domain. The active-site Proton acceptor; for dehydratase activity is H947. The C-terminal hotdog fold stretch occupies residues 1051–1198 (PCRVDGEDLR…IGTGVSERDK (148 aa)). D1115 serves as the catalytic Proton donor; for dehydratase activity. The interval 1227 to 1398 (KWLLISDCAA…SEEDETAWRD (172 aa)) is pseudo beta-ketoacyl reductase (PsiKR). The segment at 1426–1750 (SGMRLQIRTP…EHTGKLVLHI (325 aa)) is enoylreductase (ER). Residues 1772-2019 (GSYIITGGLG…AERSRFFEVF (248 aa)) are beta-ketoacyl reductase (KR). NADP(+)-binding positions include 1780–1783 (LGGL), 1803–1806 (SRTQ), 1831–1832 (DI), and 1904–1905 (FS). One can recognise a Carrier domain in the interval 2040-2126 (DEWPARLRQL…DAPAAALSSQ (87 aa)). Position 2075 is an O-(pantetheine 4'-phosphoryl)serine (S2075).

Pantetheine 4'-phosphate serves as cofactor.

The enzyme catalyses hexadecanoyl-[(hydroxy)phthioceranic acid synthase] + 7 (S)-methylmalonyl-CoA + 14 NADPH + 21 H(+) = C37-phthioceranyl-[(hydroxy)phthioceranic acid synthase] + 7 CO2 + 14 NADP(+) + 7 CoA + 7 H2O. The catalysed reaction is hexadecanoyl-[(hydroxy)phthioceranic acid synthase] + 8 (S)-methylmalonyl-CoA + 16 NADPH + 24 H(+) = C40-phthioceranyl-[(hydroxy)phthioceranic acid synthase] + 8 CO2 + 16 NADP(+) + 8 CoA + 8 H2O. It functions in the pathway lipid metabolism; fatty acid biosynthesis. The protein operates within glycolipid metabolism; sulfolipid-1 biosynthesis. Its function is as follows. Involved in sulfolipid-1 biosynthesis. Catalyzes the synthesis of the hepta- and octamethyl phthioceranic and hydroxyphthioceranic acids, the methyl-branched acyl constituents of sulfolipids. This chain is Phthioceranic/hydroxyphthioceranic acid synthase (pks2), found in Mycobacterium bovis (strain ATCC BAA-935 / AF2122/97).